We begin with the raw amino-acid sequence, 225 residues long: Putative adhesin RT0816 (225 aa).

The N-terminal stretch at 1–22 (MKKLLLIAATSATILSSSISFA) is a signal peptide.

In Rickettsia typhi (strain ATCC VR-144 / Wilmington), this protein is Putative adhesin RT0816.